Here is a 430-residue protein sequence, read N- to C-terminus: Adenylosuccinate synthetase (430 aa).

GTP contacts are provided by residues 12 to 18 (GDEGKGK) and 40 to 42 (GHT). D13 serves as the catalytic Proton acceptor. Mg(2+) is bound by residues D13 and G40. IMP is bound by residues 13-16 (DEGK), 38-41 (NAGH), T129, R143, Q224, T239, and R303. Catalysis depends on H41, which acts as the Proton donor. Position 299-305 (299-305 (ATTGRRR)) interacts with substrate. Residues R305, 331-333 (KLD), and 413-415 (SVG) contribute to the GTP site.

It belongs to the adenylosuccinate synthetase family. In terms of assembly, homodimer. It depends on Mg(2+) as a cofactor.

The protein resides in the cytoplasm. The catalysed reaction is IMP + L-aspartate + GTP = N(6)-(1,2-dicarboxyethyl)-AMP + GDP + phosphate + 2 H(+). Its pathway is purine metabolism; AMP biosynthesis via de novo pathway; AMP from IMP: step 1/2. In terms of biological role, plays an important role in the de novo pathway of purine nucleotide biosynthesis. Catalyzes the first committed step in the biosynthesis of AMP from IMP. The protein is Adenylosuccinate synthetase of Desulfatibacillum aliphaticivorans.